Consider the following 252-residue polypeptide: Beta-crystallin B1 (252 aa).

Low complexity-rich tracts occupy residues 1-15 and 24-37; these read MSQAAKASASATVAV and KGAPPAGTSPSPGT. Residues 1–42 are disordered; that stretch reads MSQAAKASASATVAVNPGPDTKGKGAPPAGTSPSPGTTLAPT. Ser2 carries the N-acetylserine modification. The segment at 2–58 is N-terminal arm; sequence SQAAKASASATVAVNPGPDTKGKGAPPAGTSPSPGTTLAPTTVPITSAKAAELPPGN. 2 Beta/gamma crystallin 'Greek key' domains span residues 59–98 and 99–143; these read YRLVVFELENFQGRRAEFSGECSNLADRGFDRVRSIIVSA and GPWV…RPIK. The interval 144–148 is connecting peptide; sequence MDAQE. 2 Beta/gamma crystallin 'Greek key' domains span residues 149–190 and 191–233; these read HKIS…KVSS and GTWV…RRLR. The tract at residues 235 to 252 is C-terminal arm; sequence KQWHLEGSFPVLATEPPK.

It belongs to the beta/gamma-crystallin family. In terms of assembly, homo/heterodimer, or complexes of higher-order. The structure of beta-crystallin oligomers seems to be stabilized through interactions between the N-terminal arms. Post-translationally, specific cleavages in the N-terminal arm occur during lens maturation and give rise to truncated forms, leading to impaired oligomerization and protein insolubilization.

Its function is as follows. Crystallins are the dominant structural components of the vertebrate eye lens. This chain is Beta-crystallin B1 (CRYBB1), found in Homo sapiens (Human).